The following is a 506-amino-acid chain: NAD(P)H-quinone oxidoreductase chain 4, chloroplastic (506 aa).

A run of 14 helical transmembrane segments spans residues 5–25 (FPLL…IPFL), 35–55 (WYTL…FIYK), 88–108 (MPLI…AWPI), 114–134 (LFYF…LSQD), 135–155 (ILLF…LLSL), 168–188 (FILY…TMAF), 209–229 (ALEI…LPAF), 243–263 (HYST…YGLI), 275–295 (VIFS…GALT), 309–329 (SSIS…DLGL), 331–351 (GAMM…FLAG), 386–406 (SLAL…LGFL), 415–435 (FIAL…IYLL), and 463–483 (IFIM…PNLT).

The protein belongs to the complex I subunit 4 family.

The protein localises to the plastid. Its subcellular location is the chloroplast thylakoid membrane. It carries out the reaction a plastoquinone + NADH + (n+1) H(+)(in) = a plastoquinol + NAD(+) + n H(+)(out). The catalysed reaction is a plastoquinone + NADPH + (n+1) H(+)(in) = a plastoquinol + NADP(+) + n H(+)(out). This chain is NAD(P)H-quinone oxidoreductase chain 4, chloroplastic, found in Chaetosphaeridium globosum (Charophycean green alga).